We begin with the raw amino-acid sequence, 304 residues long: Acetylglutamate kinase (304 aa).

Substrate-binding positions include 74-75 (GG), R96, and N201.

The protein belongs to the acetylglutamate kinase family. ArgB subfamily.

Its subcellular location is the cytoplasm. It carries out the reaction N-acetyl-L-glutamate + ATP = N-acetyl-L-glutamyl 5-phosphate + ADP. It participates in amino-acid biosynthesis; L-arginine biosynthesis; N(2)-acetyl-L-ornithine from L-glutamate: step 2/4. Catalyzes the ATP-dependent phosphorylation of N-acetyl-L-glutamate. The sequence is that of Acetylglutamate kinase from Alkalilimnicola ehrlichii (strain ATCC BAA-1101 / DSM 17681 / MLHE-1).